The following is a 1834-amino-acid chain: Sodium channel protein type 4 subunit alpha (1834 aa).

Residues 1–131 are Cytoplasmic-facing; that stretch reads MASSSLPNLV…RSAIKVLIHS (131 aa). One copy of the I repeat lies at 113 to 448; it reads MLSPFSIIRR…VVTMAYAEQN (336 aa). Residues 132–150 form a helical membrane-spanning segment; the sequence is LFSMFIMITILPNCVVMTM. Residues 151–157 are Extracellular-facing; sequence SDPPPWP. A helical membrane pass occupies residues 158–178; it reads IHVENTFTGINTFESLIKMLA. Residues 179–192 lie on the Cytoplasmic side of the membrane; sequence RGFCIDDFTFLRDP. Residues 193 to 210 form a helical membrane-spanning segment; the sequence is WNWLDFSVIMMAYLTEFV. Residues 211 to 216 lie on the Extracellular side of the membrane; it reads DLGNIS. Asparagine 214 carries an N-linked (GlcNAc...) asparagine glycan. Residues 217-233 traverse the membrane as a helical segment; sequence ALRTFRVLRALKTITVI. Residues 234 to 252 lie on the Cytoplasmic side of the membrane; sequence PGLKTIVGALIQSVKKLSD. A helical membrane pass occupies residues 253–272; the sequence is VMILTVFCLSVFALVGLQLF. The Extracellular segment spans residues 273–385; the sequence is MGNLRQKCVR…PNYGYTSHDT (113 aa). Cysteine 280 and cysteine 354 form a disulfide bridge. N-linked (GlcNAc...) asparagine glycans are attached at residues asparagine 288, asparagine 291, asparagine 297, asparagine 303, asparagine 309, asparagine 327, and asparagine 356. A disulfide bridge links cysteine 363 with cysteine 369. Residues 386-410 constitute an intramembrane region (pore-forming); it reads FSWAFLALFRLMIQDYWENLFQLTL. Over 411-417 the chain is Extracellular; sequence RAAGKTY. The chain crosses the membrane as a helical span at residues 418 to 438; that stretch reads MIFFVVIIFLGSFYLINLILA. Residues 439–572 lie on the Cytoplasmic side of the membrane; sequence VVTMAYAEQN…NIIHLIVMDP (134 aa). A disordered region spans residues 486 to 525; it reads EGGEAGGDPAHSKDCNGSLDTSPGEKGPPRQSCSADSGVS. The II repeat unit spans residues 554 to 826; the sequence is CCTPWVKFKN…QISSWPIKLG (273 aa). The helical transmembrane segment at 573–591 threads the bilayer; sequence FVDLGITICIVLNTLFMAM. Topologically, residues 592–602 are extracellular; that stretch reads EHYPMTEHFDK. Residues 603–622 form a helical membrane-spanning segment; the sequence is VLTVGNLVFTGIFTAEMVLK. Over 623–636 the chain is Cytoplasmic; it reads LIALDPYEYFQQGW. The helical transmembrane segment at 637–656 threads the bilayer; that stretch reads NVFDSIIVTLSWVELGLVNV. Over 657-658 the chain is Extracellular; it reads KG. Residues 659–676 traverse the membrane as a helical segment; the sequence is LSVLRSFRLVRSLKLAKS. Topologically, residues 677–692 are cytoplasmic; it reads WPTLNMFIRIIGNSGG. Residues 693-711 form a helical membrane-spanning segment; the sequence is GLGNLTLVLAIIVVNFSVV. The Extracellular segment spans residues 712–740; that stretch reads GMQLFGKNYKECVCKNASDCALPRWKMCD. Cysteines 725 and 731 form a disulfide. An intramembrane region (pore-forming) is located at residues 741-761; sequence FFHSFLIVLRILCGEWIEPMW. Residues 762-772 are Extracellular-facing; it reads GFMEVAGQAMF. Residues 773–791 form a helical membrane-spanning segment; it reads LTVLLMVMVNGNLVDLDLF. Residues 792–1029 lie on the Cytoplasmic side of the membrane; the sequence is LALLLNPLNS…ACFKIVEHHW (238 aa). Disordered stretches follow at residues 853–886 and 929–989; these read GDPG…KDLK and SDLE…QPEE. A compositionally biased stretch (acidic residues) spans 860 to 869; that stretch reads EAGEAEESAP. The span at 870 to 886 shows a compositional bias: basic and acidic residues; it reads EDEKKEPPPEDDDKDLK. 2 stretches are compositionally biased toward acidic residues: residues 929–945 and 972–989; these read SDLE…FSEP and EDPE…QPEE. The stretch at 1010-1323 is one III repeat; it reads RGKMWWTLRR…KKYYNAMKKL (314 aa). The helical transmembrane segment at 1030–1047 threads the bilayer; the sequence is FKTFNSSLILLNSGTLAF. Residues 1048–1060 are Extracellular-facing; the sequence is EDIYIEQRRVIRT. A helical membrane pass occupies residues 1061-1079; sequence ILEYADKVFTYIFIMEMLL. Residues 1080 to 1093 are Cytoplasmic-facing; sequence KWVAYGFKVYFTNA. A helical membrane pass occupies residues 1094–1112; sequence WCWLDFLIVDVSIISLVAN. Topologically, residues 1113 to 1120 are extracellular; sequence WLGYSELG. Residues 1121 to 1139 traverse the membrane as a helical segment; it reads PIKSLRTLRALRPLRALSR. At 1140 to 1156 the chain is on the cytoplasmic side; the sequence is FEGMRVVVNALLGAIPS. A helical membrane pass occupies residues 1157-1176; sequence IMNVLLVCLIFWVIFSIMGV. The Extracellular segment spans residues 1177 to 1227; the sequence is NLFAAKIYYFINTTTSERFDISGVNNKSECESLIHTGQVRWLNVKVNYDNV. N-linked (GlcNAc...) asparagine glycosylation is found at asparagine 1188 and asparagine 1202. The segment at residues 1228-1249 is an intramembrane region (pore-forming); that stretch reads GLGYLSLLQVATFKGWMDIMYS. Over 1250–1266 the chain is Extracellular; sequence AVDSREQEEQPQYEVNI. A helical membrane pass occupies residues 1267–1288; the sequence is YMYLYFVIFIIFGSFFTINSLI. Topologically, residues 1289–1351 are cytoplasmic; sequence RLIIVNFNQQ…MVYDFVTKQV (63 aa). An important for rapid channel inactivation region spans residues 1307 to 1309; sequence IFM. Residues 1332–1630 form an IV repeat; sequence IPRPQNKIQG…WEKFGPDATQ (299 aa). A helical transmembrane segment spans residues 1352–1369; sequence FDITIMILICLNMVTMMV. The Extracellular portion of the chain corresponds to 1370 to 1380; that stretch reads ETDDQSQLKVD. Residues 1381-1399 form a helical membrane-spanning segment; that stretch reads ILYNINMVFIIVFTGECVL. Residues 1400-1411 lie on the Cytoplasmic side of the membrane; it reads KMFALRQNYFTV. The helical transmembrane segment at 1412-1429 threads the bilayer; it reads GWNIFDFVVVILSIVGLA. Residues 1430–1442 are Extracellular-facing; sequence LSDLIQKYFVSPT. Residues 1443 to 1459 traverse the membrane as a helical segment; that stretch reads LFRVIRLARIGRVLRLI. The Cytoplasmic segment spans residues 1460 to 1478; the sequence is RGAKGIRTLLFALMMSLPA. Residues 1479–1496 form a helical membrane-spanning segment; it reads LFNIGLLLILVMFIYSIF. The Extracellular portion of the chain corresponds to 1497-1518; it reads GMSNFAYVKKESGIDDMFNFET. The pore-forming intramembrane region spans 1519-1541; the sequence is FGNSIICLFEITTSAGWDGLLNP. Over 1542–1571 the chain is Extracellular; sequence ILNSGPPDCDPTLENPGTSVRGDCGNPSIG. A disulfide bridge connects residues cysteine 1550 and cysteine 1565. The helical transmembrane segment at 1572 to 1594 threads the bilayer; that stretch reads ICFFCSYIIISFLIVVNMYIAII. Residues 1595–1834 are Cytoplasmic-facing; that stretch reads LENFNVATEE…LHPGVKESLV (240 aa). One can recognise an IQ domain in the interval 1724-1753; that stretch reads EEVCAIKIQRAYRRHLLQRSVKQASYMYRH. Residues 1776–1834 are disordered; the sequence is MYGRENGNSGVQNKGEERGSTGDAGPTMGLTPINPSDSALPPSPPPGLPLHPGVKESLV.

Belongs to the sodium channel (TC 1.A.1.10) family. Nav1.4/SCN4A subfamily. As to quaternary structure, the Nav1.4 voltage-gated sodium channel consists of an ion-conducting alpha subunit SCN4A which is functional on its own and a regulatory beta subunit SCN1B. SCN1B strongly enhances the presence of SCN4A at the cell surface. SCN1B is also required for rapid channel inactivation and recovery after inactivation. It prevents the decrease of channel activity in response to repetitive, high-frequency depolarizations. Interacts with the syntrophins SNTA1, SNTB1 and SNTB2 (via PDZ domain); probably links SCN4A to the actin cytoskeleton and the extracellular matrix via the dystrophin-associated protein complex and regulates its localization in muscle cells. Interacts with TMEM233; probable regulator of the channel.

The protein localises to the cell membrane. The enzyme catalyses Na(+)(in) = Na(+)(out). In terms of biological role, pore-forming subunit of Nav1.4, a voltage-gated sodium (Nav) channel that directly mediates the depolarizing phase of action potentials in excitable membranes. Navs, also called VGSCs (voltage-gated sodium channels) or VDSCs (voltage-dependent sodium channels), operate by switching between closed and open conformations depending on the voltage difference across the membrane. In the open conformation they allow Na(+) ions to selectively pass through the pore, along their electrochemical gradient. The influx of Na+ ions provokes membrane depolarization, initiating the propagation of electrical signals throughout cells and tissues. Highly expressed in skeletal muscles, Nav1.4 generates the action potential crucial for muscle contraction. This chain is Sodium channel protein type 4 subunit alpha, found in Equus caballus (Horse).